The sequence spans 294 residues: Flavin-dependent thymidylate synthase (294 aa).

Residues 27 to 250 (GFIRVIDYMG…PFTYEAFEEY (224 aa)) enclose the ThyX domain. Residues T73, 96-98 (RHR), and E104 each bind FAD. Residues 93-96 (QWIR), 104-108 (EYSAR), and R189 each bind dUMP. Positions 96–106 (RHRTASVNEYS) match the ThyX motif motif. Residues 205-207 (NLH) and H211 contribute to the FAD site. R216 lines the dUMP pocket. The Involved in ionization of N3 of dUMP, leading to its activation role is filled by R216.

This sequence belongs to the thymidylate synthase ThyX family. As to quaternary structure, homotetramer. Requires FAD as cofactor.

It carries out the reaction dUMP + (6R)-5,10-methylene-5,6,7,8-tetrahydrofolate + NADPH + H(+) = dTMP + (6S)-5,6,7,8-tetrahydrofolate + NADP(+). It functions in the pathway pyrimidine metabolism; dTTP biosynthesis. Functionally, catalyzes the reductive methylation of 2'-deoxyuridine-5'-monophosphate (dUMP) to 2'-deoxythymidine-5'-monophosphate (dTMP) while utilizing 5,10-methylenetetrahydrofolate (mTHF) as the methyl donor, and NADPH and FADH(2) as the reductant. This is Flavin-dependent thymidylate synthase from Rickettsia typhi (strain ATCC VR-144 / Wilmington).